Here is a 185-residue protein sequence, read N- to C-terminus: Threonylcarbamoyl-AMP synthase (185 aa).

Residues 4–185 enclose the YrdC-like domain; the sequence is SWRVQQAARE…LATGKVVRPS (182 aa).

The protein belongs to the SUA5 family. TsaC subfamily.

It is found in the cytoplasm. It catalyses the reaction L-threonine + hydrogencarbonate + ATP = L-threonylcarbamoyladenylate + diphosphate + H2O. Required for the formation of a threonylcarbamoyl group on adenosine at position 37 (t(6)A37) in tRNAs that read codons beginning with adenine. Catalyzes the conversion of L-threonine, HCO(3)(-)/CO(2) and ATP to give threonylcarbamoyl-AMP (TC-AMP) as the acyladenylate intermediate, with the release of diphosphate. This is Threonylcarbamoyl-AMP synthase from Pseudomonas fluorescens (strain ATCC BAA-477 / NRRL B-23932 / Pf-5).